The following is a 26-amino-acid chain: Histone H2B.1, sperm (26 aa).

A disordered region spans residues 1–26 (MPSQKSPTKRSPTKRSPQKGGKGAKR). 3 short sequence motifs (SPKK motif) span residues 6–9 (SPTK), 11–14 (SPTK), and 16–19 (SPQK). Residues 7 to 26 (PTKRSPTKRSPQKGGKGAKR) show a composition bias toward basic residues. Residues serine 11 and serine 16 each carry the phosphoserine modification.

It belongs to the histone H2B family. The nucleosome is a histone octamer containing two molecules each of H2A, H2B, H3 and H4 assembled in one H3-H4 heterotetramer and two H2A-H2B heterodimers. The octamer wraps approximately 147 bp of DNA. Post-translationally, monoubiquitination gives a specific tag for epigenetic transcriptional activation and is also prerequisite for histone H3 'Lys-4' and 'Lys-79' methylation. Phosphorylated on SPKK motifs 2 and 3; which may regulate DNA binding. Dephosphorylated during maturation of spermatids to mature sperm and rephosphorylated at fertilization.

It is found in the nucleus. The protein localises to the chromosome. In terms of biological role, core component of nucleosome. Nucleosomes wrap and compact DNA into chromatin, limiting DNA accessibility to the cellular machineries which require DNA as a template. Histones thereby play a central role in transcription regulation, DNA repair, DNA replication and chromosomal stability. DNA accessibility is regulated via a complex set of post-translational modifications of histones, also called histone code, and nucleosome remodeling. In Echinus esculentus (Sea urchin), this protein is Histone H2B.1, sperm.